A 545-amino-acid chain; its full sequence is Probable target of rapamycin complex 2 subunit BIT2 (545 aa).

Disordered regions lie at residues 1–24 and 78–166; these read MATD…PNIK and DGSN…GTSS. Polar residues-rich tracts occupy residues 11-24, 106-130, and 151-166; these read ATSG…PNIK, IGSS…SNSR, and RSGS…GTSS.

In terms of assembly, interacts with the target of rapamycin complex 2 (TORC2) subunit TSC11 and the TORC2 effectors SLM1 and SLM2.

This Saccharomyces cerevisiae (strain ATCC 204508 / S288c) (Baker's yeast) protein is Probable target of rapamycin complex 2 subunit BIT2 (BIT2).